Here is a 123-residue protein sequence, read N- to C-terminus: Methanesulfonate monooxygenase ferredoxin subunit (123 aa).

A Rieske domain is found at 4–99; the sequence is TYLCDAADVA…LKEEDGKLLA (96 aa). 4 residues coordinate [2Fe-2S] cluster: cysteine 43, histidine 45, cysteine 63, and histidine 66.

The protein belongs to the bacterial ring-hydroxylating dioxygenase ferredoxin component family. The MSA monooxygenase system consists of 4 proteins: the 2 subunits of the hydroxylase component (MsmA and MsmB), a ferredoxin (MsmC) and a ferredoxin reductase (MsmD). The ferredoxin component is dimeric. Requires [2Fe-2S] cluster as cofactor.

It localises to the cytoplasm. It carries out the reaction methanesulfonate + NADH + O2 = sulfite + formaldehyde + NAD(+) + H2O. Its activity is regulated as follows. MSAMO is inhibited by metal chelators (such as bathophenanthroline, bathocuprione, neocuprione, alpha-alpha-dipyridil and sodium EDTA) and by sodium azide, sodium arsenate and potassium cyanide. Functionally, methanesulfonate monooxygenase (MSAMO) mediates the primary degradation of methanesulfonic acid (MSA) to produce formaldehyd and inorganic sulfite by initial hydroxylation of the carbon atom prior to spontaneous cleavage of the unstable hydroxymethanesulfonic acid. MSAMO has a restricted substrate range that includes only the short-chain aliphatic sulfonates (methane- to butanesulfonate) and excludes all larger molecules, such as arylsulfonates and aromatic sulfonates. All MSAMO components are required for enzyme activity. This chain is Methanesulfonate monooxygenase ferredoxin subunit, found in Methylosulfonomonas methylovora.